The following is a 190-amino-acid chain: Inosine triphosphate pyrophosphatase (190 aa).

9–14 (TGNAKK) is an ITP binding site. Mg(2+) is bound at residue Glu-39. ITP contacts are provided by residues Lys-51, 67–68 (DT), Lys-84, 144–147 (FGWD), Lys-167, and 172–173 (HR).

Belongs to the HAM1 NTPase family. As to quaternary structure, homodimer. Mg(2+) serves as cofactor. It depends on Mn(2+) as a cofactor.

It is found in the cytoplasm. It catalyses the reaction ITP + H2O = IMP + diphosphate + H(+). The enzyme catalyses dITP + H2O = dIMP + diphosphate + H(+). The catalysed reaction is XTP + H2O = XMP + diphosphate + H(+). In terms of biological role, pyrophosphatase that hydrolyzes non-canonical purine nucleotides such as inosine triphosphate (ITP), deoxyinosine triphosphate (dITP) or xanthosine 5'-triphosphate (XTP) to their respective monophosphate derivatives. The enzyme does not distinguish between the deoxy- and ribose forms. Probably excludes non-canonical purines from RNA and DNA precursor pools, thus preventing their incorporation into RNA and DNA and avoiding chromosomal lesions. This is Inosine triphosphate pyrophosphatase from Pediculus humanus subsp. corporis (Body louse).